A 565-amino-acid chain; its full sequence is Thiol:disulfide interchange protein DsbD (565 aa).

The N-terminal stretch at 1-19 is a signal peptide; sequence MAQRIFTLILLLCSTSVFA. 2 cysteine pairs are disulfide-bonded: cysteine 122-cysteine 128 and cysteine 182-cysteine 304. The next 7 membrane-spanning stretches (helical) occupy residues 163–183, 208–228, 243–263, 296–316, 323–343, 365–385, and 386–406; these read LPFS…TPCV, LLTF…GLVV, YVLI…FGLF, IAGL…LLYI, WLGG…LMLI, FGFV…GDIW, and GLRL…ITSL. Residues 434 to 565 form the Thioredoxin domain; the sequence is WAFGATHTAQ…FSAHLRDRQP (132 aa). Cysteines 480 and 483 form a disulfide.

It belongs to the thioredoxin family. DsbD subfamily.

The protein resides in the cell inner membrane. The catalysed reaction is [protein]-dithiol + NAD(+) = [protein]-disulfide + NADH + H(+). The enzyme catalyses [protein]-dithiol + NADP(+) = [protein]-disulfide + NADPH + H(+). Required to facilitate the formation of correct disulfide bonds in some periplasmic proteins and for the assembly of the periplasmic c-type cytochromes. Acts by transferring electrons from cytoplasmic thioredoxin to the periplasm. This transfer involves a cascade of disulfide bond formation and reduction steps. The sequence is that of Thiol:disulfide interchange protein DsbD from Shigella dysenteriae serotype 1 (strain Sd197).